The chain runs to 265 residues: Keratinocyte-associated transmembrane protein 2 (265 aa).

The signal sequence occupies residues 1–49; sequence MAAAALKRMRGPAQAKLLPGSAIQALVGLARPLVLALLLVSAALSSVVS. Residues 50-196 lie on the Extracellular side of the membrane; it reads RTDSPSPTVL…MPSSNIEEED (147 aa). Over residues 72 to 96 the composition is skewed to polar residues; it reads THENQTKPSISQISTTLPPTMSTEK. Disordered regions lie at residues 72-123 and 135-168; these read THEN…EDPS and SPST…SDDT. N-linked (GlcNAc...) asparagine glycosylation occurs at N75. Acidic residues predominate over residues 114-123; sequence EEADNNEDPS. Residues 197–217 traverse the membrane as a helical segment; the sequence is SHFFFHLIIFAFCIAVVYITY. The Cytoplasmic portion of the chain corresponds to 218–265; that stretch reads HNKRKIFLLVQSRKWRDGLCSKTVEYHRLDQNVNEAMPSLKITNDYTF. Phosphoserine is present on residues S229 and S256.

The protein resides in the membrane. The polypeptide is Keratinocyte-associated transmembrane protein 2 (KCT2) (Pongo abelii (Sumatran orangutan)).